A 417-amino-acid polypeptide reads, in one-letter code: Serine hydroxymethyltransferase (417 aa).

Residues Leu-120 and Gly-124–Leu-126 each bind (6S)-5,6,7,8-tetrahydrofolate. Lys-229 is modified (N6-(pyridoxal phosphate)lysine).

The protein belongs to the SHMT family. Homodimer. Pyridoxal 5'-phosphate serves as cofactor.

It is found in the cytoplasm. The catalysed reaction is (6R)-5,10-methylene-5,6,7,8-tetrahydrofolate + glycine + H2O = (6S)-5,6,7,8-tetrahydrofolate + L-serine. It participates in one-carbon metabolism; tetrahydrofolate interconversion. It functions in the pathway amino-acid biosynthesis; glycine biosynthesis; glycine from L-serine: step 1/1. Catalyzes the reversible interconversion of serine and glycine with tetrahydrofolate (THF) serving as the one-carbon carrier. This reaction serves as the major source of one-carbon groups required for the biosynthesis of purines, thymidylate, methionine, and other important biomolecules. Also exhibits THF-independent aldolase activity toward beta-hydroxyamino acids, producing glycine and aldehydes, via a retro-aldol mechanism. The sequence is that of Serine hydroxymethyltransferase from Anaeromyxobacter sp. (strain Fw109-5).